The following is a 255-amino-acid chain: NAD kinase (255 aa).

Catalysis depends on aspartate 44, which acts as the Proton acceptor. Residues 44 to 45 (DG), histidine 49, 114 to 115 (NE), aspartate 144, alanine 152, 155 to 160 (SAYNLS), and glutamine 216 each bind NAD(+).

Belongs to the NAD kinase family. The cofactor is a divalent metal cation.

Its subcellular location is the cytoplasm. It catalyses the reaction NAD(+) + ATP = ADP + NADP(+) + H(+). Its function is as follows. Involved in the regulation of the intracellular balance of NAD and NADP, and is a key enzyme in the biosynthesis of NADP. Catalyzes specifically the phosphorylation on 2'-hydroxyl of the adenosine moiety of NAD to yield NADP. The chain is NAD kinase from Rickettsia rickettsii (strain Iowa).